The chain runs to 869 residues: MAAVDLDVQSLPRGGFRCCLCHVTTANRPSLDAHLGGRKHRHLVELRATRKAQGLRSVFVSGFPRDVDSAQLTQYFQAFGPVASVVMDKDKGVFAIVEMGDVGTREAVLSQPQHTLGGHRLRVRPREQKEFQSPASKSPKGAAPDSHQLTKALAEAPDVGAQMVKLVGLRELSEAERQLRNLVVALMQEVFTEFFPGCVVHPFGSSINSFDVHGCDLDLFLDLGDLEESQPAPKAPESPSLDSALASPLDPQALACTPASPPDSQPPSPQDSEALDFETPSSSLAPQTPDSALASETLASPQSLPPASPLQEDRGEGDLGKALELAEALSGEKTEGVAMLELVGSILRGCVPGVYRVQTVPSARRPVVKFCHRPSGLHGDVSLSNRLALHNSRFLSLCSELDGRVRPLVYTLRCWAQGRGLSGSGPLLSNYALTLLVIYFLQTRDPPVLPTVSQLTQKAGEGEQVEVDGWDCSFPRDASGLEPSTNKEPLSSLLAQFFSCVSCWDLRGSLLSLREGQALPVAGDLPSNRWEGLRLGPMNLQDPFDLSHNVAANVTSRVAGRLQNSCQAAANYCRSLQYQRRSSRGRDWGLLPLLQPSSPSSLLSATPIPLPPAPFTQLTAALAQVLREALGCHIEQGTKRLRSDRGGPEESPQGGTSKRLKLDGEEKSCEEGREEQQGYIRDHSEDGVEEMVVEVGEMVQDWVQSPGRPGEPPQMLREQLATGEEGQSGHAALAEQGPKGPEAAREGSQGETGRGVSLSSVSWRCALWHRVWQGRRRARRRLQQQTKERGRGSAGTAEWLAVEAQVTRELRGLSSAAQRPEAEPLLTFVASASQVNQTLTVTPIQDSQGLFPDLHHFLQVFLPQALRNL.

The segment at 16–46 (FRCCLCHVTTANRPSLDAHLGGRKHRHLVEL) adopts a Matrin-type zinc-finger fold. The 73-residue stretch at 56-128 (RSVFVSGFPR…HRLRVRPREQ (73 aa)) folds into the RRM domain. The disordered stretch occupies residues 111 to 147 (QPQHTLGGHRLRVRPREQKEFQSPASKSPKGAAPDSH). S205 provides a ligand contact to ATP. Mg(2+) is bound by residues D216 and D218. Residues D216 and D218 each coordinate UTP. The disordered stretch occupies residues 252–315 (QALACTPASP…PASPLQEDRG (64 aa)). Pro residues predominate over residues 259 to 269 (ASPPDSQPPSP). The segment covering 279-290 (TPSSSLAPQTPD) has biased composition (polar residues). N391 is a binding site for ATP. UTP is bound by residues N391, R413, Y431, and H548. Residues 490–548 (LSSLLAQFFSCVSCWDLRGSLLSLREGQALPVAGDLPSNRWEGLRLGPMNLQDPFDLSH) form the PAP-associated domain. Residues 597-869 (SSPSSLLSAT…VFLPQALRNL (273 aa)) form a KA1; binds the bulging loops of U6 snRNA but is dispensable for terminal uridylyltransferase activity region. Basic and acidic residues-rich tracts occupy residues 637 to 648 (GTKRLRSDRGGP) and 660 to 686 (LKLDGEEKSCEEGREEQQGYIRDHSED). 2 disordered regions span residues 637-686 (GTKR…HSED) and 720-755 (LATGEEGQSGHAALAEQGPKGPEAAREGSQGETGRG). A phosphoserine mark is found at S684 and S748.

This sequence belongs to the DNA polymerase type-B-like family. Associates with the cleavage and polyadenylation specificity factor (CPSF) complex. Interacts with CPSF1 and CPSF3; the interaction is direct. Interacts with PIP5K1A. Mg(2+) is required as a cofactor. It depends on Mn(2+) as a cofactor. Post-translationally, phosphorylated by CK1 in the proline-rich (Pro-rich) region.

The protein resides in the nucleus. Its subcellular location is the nucleolus. The protein localises to the nucleus speckle. It carries out the reaction RNA(n) + UTP = RNA(n)-3'-uridine ribonucleotide + diphosphate. The enzyme catalyses RNA(n) + ATP = RNA(n)-3'-adenine ribonucleotide + diphosphate. Its activity is regulated as follows. Adenylyltransferase activity is specifically phosphatidylinositol 4,5-bisphosphate (PtdIns(4,5)P2). In terms of biological role, poly(A) polymerase that creates the 3'-poly(A) tail of specific pre-mRNAs. Localizes to nuclear speckles together with PIP5K1A and mediates polyadenylation of a select set of mRNAs, such as HMOX1. In addition to polyadenylation, it is also required for the 3'-end cleavage of pre-mRNAs: binds to the 3'UTR of targeted pre-mRNAs and promotes the recruitment and assembly of the CPSF complex on the 3'UTR of pre-mRNAs. In addition to adenylyltransferase activity, also has uridylyltransferase activity. However, the ATP ratio is higher than UTP in cells, suggesting that it functions primarily as a poly(A) polymerase. Acts as a specific terminal uridylyltransferase for U6 snRNA in vitro: responsible for a controlled elongation reaction that results in the restoration of the four 3'-terminal UMP-residues found in newly transcribed U6 snRNA. Not involved in replication-dependent histone mRNA degradation. This Ailuropoda melanoleuca (Giant panda) protein is Speckle targeted PIP5K1A-regulated poly(A) polymerase (TUT1).